Reading from the N-terminus, the 294-residue chain is Acetyl-coenzyme A carboxylase carboxyl transferase subunit beta (294 aa).

A CoA carboxyltransferase N-terminal domain is found at 27–294; that stretch reads LWHKCPSCDA…PSPVALPVTA (268 aa). 4 residues coordinate Zn(2+): Cys31, Cys34, Cys50, and Cys53. The C4-type zinc finger occupies 31 to 53; sequence CPSCDAVLYRPELEKTLDVCPKC.

It belongs to the AccD/PCCB family. Acetyl-CoA carboxylase is a heterohexamer composed of biotin carboxyl carrier protein (AccB), biotin carboxylase (AccC) and two subunits each of ACCase subunit alpha (AccA) and ACCase subunit beta (AccD). The cofactor is Zn(2+).

The protein localises to the cytoplasm. The enzyme catalyses N(6)-carboxybiotinyl-L-lysyl-[protein] + acetyl-CoA = N(6)-biotinyl-L-lysyl-[protein] + malonyl-CoA. It functions in the pathway lipid metabolism; malonyl-CoA biosynthesis; malonyl-CoA from acetyl-CoA: step 1/1. Its function is as follows. Component of the acetyl coenzyme A carboxylase (ACC) complex. Biotin carboxylase (BC) catalyzes the carboxylation of biotin on its carrier protein (BCCP) and then the CO(2) group is transferred by the transcarboxylase to acetyl-CoA to form malonyl-CoA. The sequence is that of Acetyl-coenzyme A carboxylase carboxyl transferase subunit beta from Ectopseudomonas mendocina (strain ymp) (Pseudomonas mendocina).